Reading from the N-terminus, the 288-residue chain is DNA repair protein RecO (288 aa).

This sequence belongs to the RecO family.

In terms of biological role, involved in DNA repair and RecF pathway recombination. The polypeptide is DNA repair protein RecO (Trichodesmium erythraeum (strain IMS101)).